We begin with the raw amino-acid sequence, 508 residues long: Aromatic-L-amino-acid decarboxylase (508 aa).

Thr82 lines the substrate pocket. The pyridoxal 5'-phosphate site is built by Ala148 and Ser149. His192 is a substrate binding site. The pyridoxal 5'-phosphate site is built by Thr246 and Asn300. Residue Lys303 is modified to N6-(pyridoxal phosphate)lysine.

The protein belongs to the group II decarboxylase family. In terms of assembly, homodimer. It depends on pyridoxal 5'-phosphate as a cofactor.

The catalysed reaction is L-dopa + H(+) = dopamine + CO2. It carries out the reaction 5-hydroxy-L-tryptophan + H(+) = serotonin + CO2. Its function is as follows. Catalyzes the decarboxylation of L-3,4-dihydroxyphenylalanine (DOPA) to dopamine, L-5-hydroxytryptophan to serotonin and L-tryptophan to tryptamine. The polypeptide is Aromatic-L-amino-acid decarboxylase (Ddc) (Manduca sexta (Tobacco hawkmoth)).